Here is a 286-residue protein sequence, read N- to C-terminus: uncharacterized protein (286 aa).

The NADP(+) site is built by Ile54, Asn128, and Lys162. Ser178 (proton donor) is an active-site residue. NADP(+) is bound by residues Tyr192, Lys196, Ile225, and Thr227. The active-site Proton acceptor is the Tyr192. The Lowers pKa of active site Tyr role is filled by Lys196.

The protein belongs to the short-chain dehydrogenases/reductases (SDR) family.

This is an uncharacterized protein from Schizosaccharomyces pombe (strain 972 / ATCC 24843) (Fission yeast).